The following is a 115-amino-acid chain: Large ribosomal subunit protein bL19 (115 aa).

The protein belongs to the bacterial ribosomal protein bL19 family.

Its function is as follows. This protein is located at the 30S-50S ribosomal subunit interface and may play a role in the structure and function of the aminoacyl-tRNA binding site. The polypeptide is Large ribosomal subunit protein bL19 (Shouchella clausii (strain KSM-K16) (Alkalihalobacillus clausii)).